The sequence spans 303 residues: MSEPQPDLEPPQHGLYMLFLLVLVFFLMGLVGFMICHVLKKKGYRCRTSRGSEPDDAQLQPPEDDDMNEDTVERIVRCIIQNEANAEALKEMLGDSEGEGTVQLSSVDATSSLQDGAPSHHHTVHLGSSAPCIHCSRNKRPPLVRQGRSKEGKSRPRPGETTVFSVGRFRVTHIEKRYGLHEHRDGSPTDRSWGSGGGQDPGGGQGPGGGQPRTGMPAIESLPPERPQPPALASTPMQNGGLRDSSRVPRALEGNPGASAEPMLGAGGRGPSPGPARKEANGQPSKQDTSDHQVSPPRGAGGV.

A helical membrane pass occupies residues 15–35 (LYMLFLLVLVFFLMGLVGFMI). 2 disordered regions span residues 46–67 (CRTS…DDDM) and 111–303 (SSLQ…AGGV). Phosphoserine is present on Ser52. Composition is skewed to basic and acidic residues over residues 148-158 (RSKEGKSRPRP) and 172-188 (THIE…DGSP). Gly residues predominate over residues 194–212 (GSGGGQDPGGGQGPGGGQP).

This sequence belongs to the RELT family. Interacts with RELT, RELL1, OXSR1, PLSCR1 and TRAF2.

The protein resides in the cell membrane. In terms of biological role, induces activation of MAPK14/p38 cascade, when overexpressed. Induces apoptosis, when overexpressed. The chain is RELT-like protein 2 (RELL2) from Bos taurus (Bovine).